A 339-amino-acid polypeptide reads, in one-letter code: 2-keto-3-deoxygluconate permease (339 aa).

10 helical membrane-spanning segments follow: residues 10 to 30 (IPGGMMLVPLFLGALCHTFAP), 42 to 62 (GLISGTVPILAVWFFCMGASI), 77 to 97 (LVVTKIAVAWVVAAVASRILP), 100 to 120 (GVEVGFFAGLSTLALVAAMDM), 141 to 161 (AFVLMSLESGPLMTMVILGTA), 163 to 183 (IASFEPHVFVGAVLPFLVGFA), 199 to 219 (VQTLIPFFAFALGNTIDLSVI), 224 to 244 (LLGVLLGISVIIITGIPLIVA), 254 to 274 (TAGIAASSSAGAAVATPVLIA), and 289 to 309 (TLVATSVIVTSVLVPIITAMW). The segment at 315-339 (GGDGTVPKEDAVEEKAEQQRRRIIK) is disordered. Basic and acidic residues predominate over residues 320-339 (VPKEDAVEEKAEQQRRRIIK).

The protein belongs to the KdgT transporter family.

It localises to the cell inner membrane. It carries out the reaction 2-dehydro-3-deoxy-D-gluconate(in) + H(+)(in) = 2-dehydro-3-deoxy-D-gluconate(out) + H(+)(out). Uptake is inhibited by the protonophore uncouplers carbonyl cyanide m-chlorophenylhydrazone (CCCP) and 2,4-dinitrophenol, and by NaN(3). In terms of biological role, catalyzes the proton-dependent uptake of 2-keto-3-deoxygluconate (KDG) into the cell. Can also mediate the uptake of glucuronate with a low affinity, and may mediate the uptake of 5-keto-4-deoxyuronate (DKI) and 2,5-diketo-3-deoxygluconate (DKII), which are intermediates in pectin degradation. The protein is 2-keto-3-deoxygluconate permease of Dickeya chrysanthemi (Pectobacterium chrysanthemi).